We begin with the raw amino-acid sequence, 98 residues long: NADH-ubiquinone oxidoreductase chain 4L (98 aa).

The next 3 membrane-spanning stretches (helical) occupy residues 1 to 21, 30 to 50, and 61 to 81; these read MSLVYMNTALAFSISMLGLLM, LLCLEGMMLSLFTLGAITILT, and IVLLVFAACEAAVGLSLLVMV.

The protein belongs to the complex I subunit 4L family. As to quaternary structure, core subunit of respiratory chain NADH dehydrogenase (Complex I) which is composed of 45 different subunits.

Its subcellular location is the mitochondrion inner membrane. It carries out the reaction a ubiquinone + NADH + 5 H(+)(in) = a ubiquinol + NAD(+) + 4 H(+)(out). In terms of biological role, core subunit of the mitochondrial membrane respiratory chain NADH dehydrogenase (Complex I) which catalyzes electron transfer from NADH through the respiratory chain, using ubiquinone as an electron acceptor. Part of the enzyme membrane arm which is embedded in the lipid bilayer and involved in proton translocation. This is NADH-ubiquinone oxidoreductase chain 4L (MT-ND4L) from Crocidura russula (Greater white-toothed shrew).